The primary structure comprises 317 residues: Tyrosine--tRNA ligase (317 aa).

Residue Y32 coordinates L-tyrosine. Residues 37–45 (PSGEIHLGH) carry the 'HIGH' region motif. Y152, Q156, D159, and Q174 together coordinate L-tyrosine. Residues 208 to 212 (KMSSS) carry the 'KMSKS' region motif. S211 is a binding site for ATP.

It belongs to the class-I aminoacyl-tRNA synthetase family. TyrS type 3 subfamily. As to quaternary structure, homodimer.

It localises to the cytoplasm. The catalysed reaction is tRNA(Tyr) + L-tyrosine + ATP = L-tyrosyl-tRNA(Tyr) + AMP + diphosphate + H(+). Catalyzes the attachment of tyrosine to tRNA(Tyr) in a two-step reaction: tyrosine is first activated by ATP to form Tyr-AMP and then transferred to the acceptor end of tRNA(Tyr). This Methanocorpusculum labreanum (strain ATCC 43576 / DSM 4855 / Z) protein is Tyrosine--tRNA ligase.